The chain runs to 524 residues: AAA ATPase forming ring-shaped complexes (524 aa).

Residues 1–29 (MGMGQEKHTDAASQSRDPEAVAAHENDQL) are disordered. Positions 22-59 (AAHENDQLRQRNHALAKALTRATEELRKAKAQLEQFMA) form a coiled coil. 250-255 (GNGKTL) contacts ATP.

It belongs to the AAA ATPase family. Homohexamer. Assembles into a hexameric ring structure.

This chain is AAA ATPase forming ring-shaped complexes, found in Bifidobacterium animalis subsp. lactis (strain BB-12).